The chain runs to 115 residues: Glycine cleavage system H-like protein (115 aa).

Residues 17 to 99 (VVRLGLTEKM…EGEGWLAVVR (83 aa)) form the Lipoyl-binding domain. At K58 the chain carries N6-lipoyllysine.

The protein belongs to the GcvH family. Requires (R)-lipoate as cofactor.

This is Glycine cleavage system H-like protein from Chlamydia pneumoniae (Chlamydophila pneumoniae).